A 484-amino-acid chain; its full sequence is Auxin transporter-like protein 2 (484 aa).

Over 1-59 (MLPQKQGEEAIVSSFNETDQQEGVVGREEEVEDHSFSVKNFLWHGGSVWDAWFSCASNQ) the chain is Cytoplasmic. A helical transmembrane segment spans residues 60-77 (VAQVLLTLPYSFSQLGML). Over 78–79 (SG) the chain is Extracellular. Residues 80–100 (ILLQVFYGILGSWTAYLISVL) form a helical membrane-spanning segment. The Cytoplasmic segment spans residues 101–135 (YVEYRSRKEKENVNFKNHVIQWFEVLDGLLGPYWK). A helical membrane pass occupies residues 136-156 (ALGLAFNCTFLLFGSVIQLIA). Residues 157-172 (CASNIYYINDNLDKRT) lie on the Extracellular side of the membrane. The chain crosses the membrane as a helical span at residues 173 to 193 (WTYIFGACCATTVFIPSFHNY). Topologically, residues 194 to 196 (RIW) are cytoplasmic. A helical transmembrane segment spans residues 197–217 (SFLGLGMTTYTAWYLTIASIV). Over 218–232 (HGQAENVTHTGPKKL) the chain is Extracellular. The N-linked (GlcNAc...) asparagine glycan is linked to asparagine 223. A helical transmembrane segment spans residues 233–253 (VLYFTGATNILYTFGGHAVTV). The Cytoplasmic portion of the chain corresponds to 254-266 (EIMHAMWKPQKFK). The helical transmembrane segment at 267-287 (YIYLMATLYVFTLTIPSATAV) threads the bilayer. Over 288–314 (YWAFGDELLNHSNAFSLLPKNGWRDGA) the chain is Extracellular. The N-linked (GlcNAc...) asparagine glycan is linked to asparagine 297. The helical transmembrane segment at 315-335 (VILMLIHQFITFGFACTPLYF) threads the bilayer. The Cytoplasmic portion of the chain corresponds to 336–356 (VWEKVIGMHDTRSICLRALAR). Residues 357-377 (LPVVIPIWFLAIIFPFFGPIN) traverse the membrane as a helical segment. A topological domain (extracellular) is located at residue serine 378. Residues 379–399 (AVGALLVSFTVYIIPSAAHML) traverse the membrane as a helical segment. The Cytoplasmic segment spans residues 400–425 (TYRKASARKNAAEKPPFFMPSWTAMY). The chain crosses the membrane as a helical span at residues 426-446 (IFNAFIVIWVLVVGFGFGGWA). Residues 447 to 484 (SMTNFIRQIDTFGLFAKCYQCKPPPVMAAAPPPHALHH) are Extracellular-facing.

This sequence belongs to the amino acid/polyamine transporter 2 family. Amino acid/auxin permease (AAAP) (TC 2.A.18.1) subfamily. As to expression, shoots and roots of nodulating plants. Higher levels in roots, flowers and stems, lower in nodules, leaves, petioles and shoot apices.

It localises to the cell membrane. Carrier protein involved in proton-driven auxin influx. Mediates the formation of auxin gradient from developing leaves (site of auxin biosynthesis) to tips by contributing to the loading of auxin in vascular tissues and facilitating acropetal (base to tip) auxin transport within inner tissues of the root apex, and basipetal (tip to base) auxin transport within outer tissues of the root apex. May be involved in lateral roots and nodules formation. This is Auxin transporter-like protein 2 (LAX2) from Medicago truncatula (Barrel medic).